The sequence spans 692 residues: Eomesodermin (692 aa).

A disordered region spans residues 35–135 (NSSTPNLPHT…LNTAVPTSAP (101 aa)). Residues 263–443 (LWLKFHRHQT…HNPFAKGFRD (181 aa)) constitute a DNA-binding region (T-box). The segment at 578 to 692 (SMAGWGSRGS…LGYYSFYSSS (115 aa)) is required for transcription activation. 2 disordered regions span residues 595–614 (TSLP…DLLP) and 621–673 (EMSS…DIGT). Low complexity-rich tracts occupy residues 596–609 (SLPW…SGFS) and 654–665 (SPSTSSNENSPP).

The protein localises to the nucleus. Its function is as follows. Functions as a transcriptional activator playing a crucial role during development. Functions in gastrulation, regulating mesoderm differentiation. Activates wnt8, t/bra, chrd and mix-A/mix.1 expression. The sequence is that of Eomesodermin (eomes) from Xenopus laevis (African clawed frog).